Consider the following 646-residue polypeptide: 1-deoxy-D-xylulose-5-phosphate synthase (646 aa).

Thiamine diphosphate-binding positions include His86 and 127–129 (AHS). Asp158 contributes to the Mg(2+) binding site. Thiamine diphosphate-binding positions include 159 to 160 (GA), Asn188, Tyr295, and Glu377. Asn188 provides a ligand contact to Mg(2+).

It belongs to the transketolase family. DXPS subfamily. In terms of assembly, homodimer. Mg(2+) is required as a cofactor. It depends on thiamine diphosphate as a cofactor.

It catalyses the reaction D-glyceraldehyde 3-phosphate + pyruvate + H(+) = 1-deoxy-D-xylulose 5-phosphate + CO2. It participates in metabolic intermediate biosynthesis; 1-deoxy-D-xylulose 5-phosphate biosynthesis; 1-deoxy-D-xylulose 5-phosphate from D-glyceraldehyde 3-phosphate and pyruvate: step 1/1. Its function is as follows. Catalyzes the acyloin condensation reaction between C atoms 2 and 3 of pyruvate and glyceraldehyde 3-phosphate to yield 1-deoxy-D-xylulose-5-phosphate (DXP). The protein is 1-deoxy-D-xylulose-5-phosphate synthase of Burkholderia cenocepacia (strain HI2424).